Here is a 199-residue protein sequence, read N- to C-terminus: Transcriptional regulatory protein EntR (199 aa).

Positions 3–124 (KILVIDRCHF…TLSHTIQEAL (122 aa)) constitute a Response regulatory domain. A 4-aspartylphosphate modification is found at Asp-8. The HTH luxR-type domain occupies 133-198 (PKNATPLLTP…SPFLSLPGKG (66 aa)). A DNA-binding region (H-T-H motif) is located at residues 157–176 (NNAIAAALSIHGKTVYTYKR).

Its function is as follows. May serve to repress the entericidin locus in C.freundii. The sequence is that of Transcriptional regulatory protein EntR (ecnR) from Citrobacter freundii.